Reading from the N-terminus, the 1119-residue chain is MTISDKIRIYELSRDLNLDNKDILGAAQKLSISVKSHSSSISAEEAEKIKNLINKKNPDKKILSIKKPSIKKDNYKQNKEDKSSLISSVEEKPFKDNPEKKPLLKKPLNKPESLKIISNQPKSLNKPTITNSSQSQANLTNQNLNSKTSQNLNQDKRNFRNNLTPPIKSPTKPPIQLIAKPKNTTKNVQSNESSQNILNSGGGRQISNKPDQNSSKSKTKNINNRMSPPELVGAPIRREGPNKQNNKQKTSFKQTVPNRPGMLNRPGLRNKPSDQGRPGSFNRQTNTNRPGAPSSNKPGMPNRPGLRNKPSDQGRPGSFNRQVNTNRSGAPIRPGMPNRPGSKFNGPKSPGMRKPVSPNELLKLQKTNKSENDKQVINNNEKQNSETTKQKVKAPNSRPHTAPNSKKLPHRTFSNNSKKPGKTDWDDSAKLEALRNKNPQKQRQKVRIIGENDDSLTSETSGYSGEKFSILSASLARPKKEKSDESKSQKTIKQFKKKKKETTRQRQKRRAMELKAAKEAKQIRPEMIIVPEDNLTVQELADKLSLESSEIIKSLFFKGITATVTQSLDLATIETVAEEFGVPVLQDDIQEAAEKTVDMIESEDLDNLIKRPPVITVMGHVDHGKTSLLDSIRESRVASGEAGGITQHIGAYQVEFEHESKKKKLTFLDTPGHEAFTAMRARGTKVTDVAVLVVAADDGCRPQTLEAISHARAAKVPIVVAINKIDKEGASPDRVKQELSEKNLIAEDWGGDTVMVPVSAIKKQNINKLLEMILLVSEVEDLQANPDRFAKGTVIEAHLDKAKGPVATLLVQNGTLKSGDVLAAGSVLGKIRAMVDEHGNRIKDAGPSFPVEALGFSEVPTAGDEFEVYPDEKTARAIVGERATDARATKLAQQMASRRVSLSSLSTQANDGELKELNLILKADVQGSVEAILGSLEQLPKNEVQVRVLLSAPGEITETDIDLAAASGSVIIGFNTSLASGAKKAADANDVDVREYEVIYKLLEDIQLAMEGLLEPDLVEESLGKAEVRATFSVGKGAIAGCYIQTGKLQRNCSLRVIRSEKVIFEGNLDSLKRSKDDVKEVNTGFECGVGCDKFSSWIEGDIIEAFKFVTKKRTLTQE.

2 disordered regions span residues 64–463 (SIKK…TSGY) and 477–507 (RPKKEKSDESKSQKTIKQFKKKKKETTRQRQ). The span at 70-102 (IKKDNYKQNKEDKSSLISSVEEKPFKDNPEKKP) shows a compositional bias: basic and acidic residues. 2 stretches are compositionally biased toward polar residues: residues 116–153 (IISNQPKSLNKPTITNSSQSQANLTNQNLNSKTSQNLN) and 182–212 (KNTTKNVQSNESSQNILNSGGGRQISNKPDQ). Positions 213–224 (NSSKSKTKNINN) are enriched in low complexity. Composition is skewed to polar residues over residues 242–257 (NKQNNKQKTSFKQTVP), 281–297 (FNRQTNTNRPGAPSSNK), 319–328 (FNRQVNTNRS), and 375–387 (QVINNNEKQNSET). Positions 421–435 (GKTDWDDSAKLEALR) are enriched in basic and acidic residues. A compositionally biased stretch (basic residues) spans 493 to 507 (KQFKKKKKETTRQRQ). The region spanning 610-782 (KRPPVITVMG…ILLVSEVEDL (173 aa)) is the tr-type G domain. The interval 619 to 626 (GHVDHGKT) is G1. Residue 619–626 (GHVDHGKT) participates in GTP binding. The interval 644 to 648 (GITQH) is G2. A G3 region spans residues 669–672 (DTPG). GTP-binding positions include 669–673 (DTPGH) and 723–726 (NKID). A G4 region spans residues 723-726 (NKID). A G5 region spans residues 759-761 (SAI).

It belongs to the TRAFAC class translation factor GTPase superfamily. Classic translation factor GTPase family. IF-2 subfamily.

It localises to the cytoplasm. One of the essential components for the initiation of protein synthesis. Protects formylmethionyl-tRNA from spontaneous hydrolysis and promotes its binding to the 30S ribosomal subunits. Also involved in the hydrolysis of GTP during the formation of the 70S ribosomal complex. The chain is Translation initiation factor IF-2 from Prochlorococcus marinus (strain MIT 9215).